The sequence spans 436 residues: ATP-sensitive inward rectifier potassium channel 14 (436 aa).

Topologically, residues 1–83 (MGLARALRRL…LSDLFTTCVD (83 aa)) are cytoplasmic. A disordered region spans residues 14 to 43 (LDSGDSRAGDEEEAGPGLCRNGWAPAPVQS). Position 81 is an S-nitrosocysteine (C81). A helical membrane pass occupies residues 84 to 110 (VRWRWMCLLFSCSFLASWLLFGLAFWL). Topologically, residues 111–133 (IASLHGDLAAPPPPAPCFSHVAS) are extracellular. The helical; Pore-forming intramembrane region spans 134-150 (FLAAFLFALETQTSIGY). Positions 147-152 (SIGYGV) match the Selectivity filter motif. At 151–159 (GVRSVTEEC) the chain is on the extracellular side. The helical transmembrane segment at 160–187 (PAAVAAVVLQCIAGCVLDAFVVGAVMAK) threads the bilayer. Over 188–436 (MAKPKKRNET…TPTLALTLPP (249 aa)) the chain is Cytoplasmic. A compositionally biased stretch (acidic residues) spans 400 to 418 (QEEDEDDETEEGNGVETED). A disordered region spans residues 400–436 (QEEDEDDETEEGNGVETEDGAASPRVLTPTLALTLPP). Residues 426 to 436 (LTPTLALTLPP) show a composition bias toward low complexity.

Belongs to the inward rectifier-type potassium channel (TC 1.A.2.1) family. KCNJ14 subfamily. In terms of tissue distribution, expressed preferentially in retina.

Its subcellular location is the membrane. The enzyme catalyses K(+)(in) = K(+)(out). Its activity is regulated as follows. Channel activity is regulated by variations of cytosolic pH; channels are activated by alkaline and inhibited by acidic pH values. Inhibited by Ba(2+) and Cs(+) in a voltage-dependent manner; sensitivity to those inhibitors is lower than in other Kir channels. Its function is as follows. Inward rectifier potassium channels are characterized by a greater tendency to allow potassium to flow into the cell rather than out of it. Their voltage dependence is regulated by the concentration of extracellular potassium; as external potassium is raised, the voltage range of the channel opening shifts to more positive voltages. This chain is ATP-sensitive inward rectifier potassium channel 14 (KCNJ14), found in Homo sapiens (Human).